Reading from the N-terminus, the 331-residue chain is Glyceraldehyde-3-phosphate dehydrogenase (331 aa).

NAD(+) is bound by residues 10-11 (RI), Asp-31, Lys-75, and Thr-117. Residues 148 to 150 (SCT) and Thr-179 each bind D-glyceraldehyde 3-phosphate. The active-site Nucleophile is Cys-149. NAD(+) is bound at residue Asn-180. D-glyceraldehyde 3-phosphate contacts are provided by residues Arg-194, 207–208 (TG), and Arg-230. Position 311 (Asn-311) interacts with NAD(+).

The protein belongs to the glyceraldehyde-3-phosphate dehydrogenase family. Homotetramer.

It localises to the cytoplasm. The catalysed reaction is D-glyceraldehyde 3-phosphate + phosphate + NAD(+) = (2R)-3-phospho-glyceroyl phosphate + NADH + H(+). The protein operates within carbohydrate degradation; glycolysis; pyruvate from D-glyceraldehyde 3-phosphate: step 1/5. Its function is as follows. Catalyzes the oxidative phosphorylation of glyceraldehyde 3-phosphate (G3P) to 1,3-bisphosphoglycerate (BPG) using the cofactor NAD. The first reaction step involves the formation of a hemiacetal intermediate between G3P and a cysteine residue, and this hemiacetal intermediate is then oxidized to a thioester, with concomitant reduction of NAD to NADH. The reduced NADH is then exchanged with the second NAD, and the thioester is attacked by a nucleophilic inorganic phosphate to produce BPG. The sequence is that of Glyceraldehyde-3-phosphate dehydrogenase (gap) from Thermus aquaticus.